A 5412-amino-acid chain; its full sequence is Mucin-4 (5412 aa).

A signal peptide spans 1–28 (MKGARWRRVPWVSLSCLCLCLLPHVVPG). Disordered stretches follow at residues 40–87 (TAAP…TTSK) and 142–249 (TSTD…ATSS). The interval 43–4241 (PVTSTGSTTA…SVSTGHATPL (4199 aa)) is variable number of tandem repeats (VNTR). A compositionally biased stretch (low complexity) spans 142 to 163 (TSTDSTLGNTEETSTAGTESST). Residues Thr-154 and Thr-156 are each glycosylated (O-linked (GalNAc...) threonine). The span at 164–199 (PVTSAVSITAGQEGQSRTTSWRTSIQDTSASSQNHW) shows a compositional bias: polar residues. The segment covering 200-223 (TRSTQTTRESQTSTLTHRTTSTPS) has biased composition (low complexity). Positions 224-249 (FSPSVHNVTGTVSQKTSPSGETATSS) are enriched in polar residues. Asn-230 carries N-linked (GlcNAc...) asparagine glycosylation. Thr-234 is a glycosylation site (O-linked (GalNAc...) threonine). Asn-255 carries N-linked (GlcNAc...) asparagine glycosylation. 3 stretches are compositionally biased toward polar residues: residues 267-285 (TTST…SVPV), 306-328 (SPAT…HQTQ), and 358-367 (GFNPSGTVSQ). Disordered stretches follow at residues 267 to 286 (TTST…VPVT), 303 to 328 (EGQS…HQTQ), 353 to 383 (LSSP…PSSV), 438 to 473 (LSPS…SFSP), 488 to 580 (WPSS…ALLS), 592 to 853 (TATS…ASAS), 868 to 963 (VPGT…SGSG), 983 to 1864 (SSAS…DASS), 1878 to 2078 (ASSV…TGHA), 2111 to 2220 (TALH…ASTG), 2232 to 2814 (SAST…TGHA), 2837 to 3306 (IPSS…SSVS), 3320 to 3580 (SAST…VSTG), 3592 to 3644 (SVST…VSTG), 3656 to 3756 (SVST…ASTG), and 3769 to 4223 (VSTG…GHAT). Thr-364, Thr-369, and Thr-376 each carry an O-linked (GalNAc...) threonine glycan. Residues 368 to 383 (ETFPSGETTTSSPSSV) show a composition bias toward low complexity. 3 stretches are compositionally biased toward polar residues: residues 450–459 (AFHTQQSEGA), 488–526 (WPSS…TGTA), and 546–557 (TTYSSHSTTLPK). Composition is skewed to low complexity over residues 558–577 (TTGA…TGEA) and 615–627 (STNH…TSTS). N-linked (GlcNAc...) asparagine glycosylation occurs at Asn-617. Residues Thr-620, Thr-666, and Thr-688 are each glycosylated (O-linked (GalNAc...) threonine). Residues 628–677 (PQESPAVSQRGHTQAPQTTQESQTTRSVSPMTDTKTVTTPGSSFTASGHS) show a composition bias toward polar residues. The span at 705–717 (TTQAPTTALQAAP) shows a compositional bias: low complexity. A compositionally biased stretch (polar residues) spans 729–746 (GTSLSKTGALTLANSVVS). The O-linked (GalNAc...) threonine glycan is linked to Thr-747. The span at 756-771 (TSASASTSPDTAAAMT) shows a compositional bias: low complexity. Residues 772-789 (HTHQAESTEASGQTQTSE) are compositionally biased toward polar residues. Low complexity predominate over residues 790-828 (PASSGSRTTSAGTATPSSSGASGTTPSGSEGISTSGETT). O-linked (GalNAc...) threonine glycans are attached at residues Thr-797, Thr-798, Thr-802, Thr-804, Thr-813, and Thr-814. A compositionally biased stretch (polar residues) spans 829–852 (RFSSNPSRDSHTTQSTTELLSASA). O-linked (GalNAc...) threonine glycans are attached at residues Thr-881, Thr-886, and Thr-892. The segment covering 885–903 (PTGQSSPTSPSASPQETAA) has biased composition (low complexity). Over residues 907–928 (MAQTQRTRTSRGSDTISLASQA) the composition is skewed to polar residues. Residues 929–950 (TDTFSTVPPTPPSITSTGLTSP) are compositionally biased toward low complexity. O-linked (GalNAc...) threonine glycosylation is found at Thr-931, Thr-934, Thr-938, Thr-943, Thr-945, Thr-948, Thr-952, Thr-954, Thr-1003, Thr-1007, Thr-1012, Thr-1019, Thr-1022, Thr-1023, Thr-1028, Thr-1030, Thr-1035, Thr-1039, Thr-1044, Thr-1051, Thr-1055, Thr-1060, Thr-1062, Thr-1067, Thr-1071, Thr-1076, Thr-1083, Thr-1086, Thr-1087, Thr-1092, Thr-1094, Thr-1099, Thr-1103, Thr-1108, Thr-1110, Thr-1115, Thr-1118, Thr-1119, Thr-1124, Thr-1126, Thr-1131, Thr-1135, Thr-1172, Thr-1179, Thr-1182, Thr-1183, Thr-1188, Thr-1195, Thr-1199, Thr-1204, Thr-1236, Thr-1243, Thr-1246, and Thr-1247. Polar residues predominate over residues 951-963 (QTETHTLSPSGSG). Positions 1007–1024 (TPLPVTSPSSVSTGHTTP) are enriched in low complexity. A compositionally biased stretch (polar residues) spans 1028–1054 (TDTSSESTGHVTPLPVTSFSSASTGDS). Residues 1060–1086 (TDTSSASTGHVTPLPVTSLSSASTGDT) are compositionally biased toward polar residues. Positions 1092–1118 (TDTSSASTGHATSLPVTDTSSVSTGHT) are enriched in polar residues. Composition is skewed to polar residues over residues 1124–1150 (TDTS…TGHT) and 1157–1197 (DASS…STGH). Polar residues-rich tracts occupy residues 1204 to 1213 (TDTSSASTGH) and 1221 to 1246 (DASS…TGHT). The segment covering 1252 to 1262 (TDTSSASTGQA) has biased composition (polar residues). The span at 1263–1279 (TSLLVTDTSSVSTGDTT) shows a compositional bias: low complexity. O-linked (GalNAc...) threonine glycans are attached at residues Thr-1278, Thr-1279, Thr-1284, Thr-1286, Thr-1291, Thr-1295, Thr-1300, Thr-1307, Thr-1311, Thr-1316, Thr-1323, Thr-1326, Thr-1332, Thr-1339, Thr-1342, Thr-1343, and Thr-1348. Positions 1281–1325 (LPVTSTSSASTGHVTPLHVTSPSSASTGHATPLPVTSLSSASTGD) are enriched in polar residues. Residues 1332–1342 (TSPSSASTGDT) show a composition bias toward polar residues. Polar residues-rich tracts occupy residues 1349–1358 (DASSVSTGHT) and 1365–1405 (DASS…STGH). O-linked (GalNAc...) threonine glycans are attached at residues Thr-1380, Thr-1387, Thr-1390, Thr-1391, Thr-1396, Thr-1403, Thr-1407, Thr-1412, Thr-1444, Thr-1451, Thr-1454, and Thr-1455. Composition is skewed to polar residues over residues 1412 to 1421 (TDTSSASTGH) and 1429 to 1454 (DASS…TGHT). The span at 1460–1470 (TDTSSASTGQA) shows a compositional bias: polar residues. Residues 1471-1487 (TSLLVTDTSSVSTGDTT) are compositionally biased toward low complexity. O-linked (GalNAc...) threonine glycosylation is found at Thr-1486, Thr-1487, Thr-1492, Thr-1494, Thr-1499, Thr-1503, Thr-1508, Thr-1515, Thr-1519, Thr-1524, Thr-1531, Thr-1534, Thr-1540, Thr-1547, Thr-1550, Thr-1551, Thr-1556, Thr-1563, Thr-1566, Thr-1567, Thr-1572, Thr-1579, Thr-1582, Thr-1583, Thr-1588, Thr-1590, Thr-1598, Thr-1599, Thr-1604, Thr-1611, Thr-1614, Thr-1615, Thr-1620, Thr-1622, Thr-1627, and Thr-1630. Polar residues predominate over residues 1489–1533 (LPVTSTSSASTGHVTPLHVTSPSSASTGHATPLPVTSLSSASTGD). The segment covering 1540 to 1550 (TSPSSASTGDT) has biased composition (polar residues). The span at 1557–1582 (DASSVSTGHTTPLPVTSPSSASTGHT) shows a compositional bias: polar residues. The segment covering 1588-1614 (TDTSSASKGDTTPLPVTSPSSASTGHT) has biased composition (polar residues). Residues 1620–1631 (TDTSSASTGDTT) show a composition bias toward low complexity. Polar residues predominate over residues 1633 to 1661 (LPVTNASSLSTGHATPLHVTSPSSASTGH). N-linked (GlcNAc...) asparagine glycosylation is present at Asn-1637. O-linked (GalNAc...) threonine glycans are attached at residues Thr-1659, Thr-1663, Thr-1668, Thr-1670, Thr-1675, Thr-1679, Thr-1716, Thr-1723, Thr-1726, Thr-1727, Thr-1732, Thr-1764, Thr-1766, Thr-1812, Thr-1819, Thr-1822, Thr-1823, Thr-1828, Thr-1835, Thr-1838, Thr-1839, Thr-1844, Thr-1854, and Thr-1855. Residues 1668 to 1679 (TSTSSASTGHAT) show a composition bias toward low complexity. 3 stretches are compositionally biased toward polar residues: residues 1701–1741 (DVSS…STGH), 1749–1773 (DASS…STAH), and 1812–1822 (TSPSSASTGDT). A compositionally biased stretch (low complexity) spans 1828–1840 (TDASSASTGDTTS). Composition is skewed to polar residues over residues 1841 to 1864 (LPVT…DASS), 1892 to 1902 (TDTNSASTGDT), and 1909 to 1950 (DASS…SGHT). 44 O-linked (GalNAc...) threonine glycosylation sites follow: Thr-1931, Thr-1934, Thr-1935, Thr-1940, Thr-1950, Thr-1951, Thr-1956, Thr-1963, Thr-1995, Thr-1999, Thr-2004, Thr-2006, Thr-2015, Thr-2020, Thr-2027, Thr-2030, Thr-2031, Thr-2036, Thr-2038, Thr-2047, Thr-2052, Thr-2062, Thr-2063, Thr-2132, Thr-2137, Thr-2139, Thr-2142, Thr-2143, Thr-2148, Thr-2150, Thr-2155, Thr-2159, Thr-2164, Thr-2180, Thr-2182, Thr-2187, Thr-2191, Thr-2196, Thr-2198, Thr-2203, Thr-2207, Thr-2244, Thr-2254, and Thr-2255. Residues 1957-1981 (DASSVPTGHATSLPVTDASSVSTGH) are compositionally biased toward polar residues. The segment covering 2004 to 2030 (TDTSSVSTGQATPLPVTSLSSASTGDT) has biased composition (polar residues). Residues 2036–2077 (TDTSSASTGQDTPLPVTSLSSVSTGDTTPLPVTNPSSASTGH) show a composition bias toward polar residues. Residues 2125–2146 (DTTPLPVTSPSSTSTGDTTPLP) show a composition bias toward low complexity. Polar residues predominate over residues 2148 to 2189 (TETSSVSTGHATSLPVTDTSSASTGHATSLPVTDTSSASTGH). 2 stretches are compositionally biased toward polar residues: residues 2196–2219 (TDTS…SAST) and 2232–2254 (SAST…TGDT). The segment covering 2261–2270 (DASSVSTGHA) has biased composition (polar residues). A compositionally biased stretch (low complexity) spans 2271 to 2283 (TSLPVTSLSSVST). Thr-2283, Thr-2286, Thr-2287, Thr-2292, Thr-2299, Thr-2303, Thr-2308, Thr-2324, Thr-2331, Thr-2334, Thr-2335, Thr-2340, Thr-2347, Thr-2351, Thr-2356, Thr-2363, Thr-2366, Thr-2367, Thr-2372, Thr-2382, Thr-2383, Thr-2388, Thr-2395, Thr-2398, Thr-2399, and Thr-2406 each carry an O-linked (GalNAc...) threonine glycan. The segment covering 2284–2301 (GDTTPLPVTSPSSASTGH) has biased composition (polar residues). Polar residues predominate over residues 2309-2349 (DASSASTGHATPLPVTSLSSASTGDTTPLPVTSPSSASTGH). A compositionally biased stretch (low complexity) spans 2366–2399 (TTPLPVTSSSSASSGHTTPLPVTDASSASTGDTT). Polar residues-rich tracts occupy residues 2404–2413 (TDTSSASTGH) and 2421–2445 (GLSS…STGH). Asn-2437 carries N-linked (GlcNAc...) asparagine glycosylation. O-linked (GalNAc...) threonine glycosylation is found at Thr-2452, Thr-2454, Thr-2459, Thr-2462, Thr-2463, Thr-2468, Thr-2500, Thr-2507, Thr-2510, Thr-2511, Thr-2516, Thr-2518, Thr-2523, and Thr-2526. The span at 2452–2471 (TSTSSASTGDTTPLPGTDTS) shows a compositional bias: low complexity. Positions 2485–2510 (DASSVSTGDTTRLPVTSPSSASTGHT) are enriched in polar residues. A compositionally biased stretch (polar residues) spans 2517–2573 (DTPSASTGDTTPLPVTNASSLSTRHATSLHVTSPSSASTGHATSLPVTDTSAASTGH). N-linked (GlcNAc...) asparagine glycosylation occurs at Asn-2533. Thr-2564, Thr-2566, Thr-2571, Thr-2575, Thr-2580, Thr-2582, Thr-2587, Thr-2590, Thr-2591, Thr-2596, Thr-2598, Thr-2619, Thr-2622, Thr-2623, Thr-2628, Thr-2660, Thr-2667, Thr-2670, Thr-2671, Thr-2676, Thr-2683, Thr-2687, Thr-2692, and Thr-2694 each carry an O-linked (GalNAc...) threonine glycan. The span at 2580–2591 (TSTSSASTGDTT) shows a compositional bias: low complexity. Composition is skewed to polar residues over residues 2597–2637 (DTYS…STGH) and 2645–2691 (DASS…SLPV). Over residues 2692–2704 (TDTSSASTGDTTS) the composition is skewed to low complexity. Over residues 2705 to 2723 (LPVTDTSSAYTGDTTSLPV) the composition is skewed to polar residues. A compositionally biased stretch (low complexity) spans 2724–2735 (TDTSSSSTGDTT). Thr-2740, Thr-2742, Thr-2750, Thr-2751, Thr-2756, Thr-2758, Thr-2763, and Thr-2767 each carry an O-linked (GalNAc...) threonine glycan. The span at 2740 to 2750 (TETSSVSTGDT) shows a compositional bias: polar residues. Over residues 2756-2798 (TDTSSASTGHATPLPVTNTSSVSTGHATPLHVTSPSSASTGHT) the composition is skewed to polar residues. Asn-2773 carries N-linked (GlcNAc...) asparagine glycosylation. 7 O-linked (GalNAc...) threonine glycosylation sites follow: Thr-2779, Thr-2783, Thr-2788, Thr-2795, Thr-2798, Thr-2799, and Thr-2804. 2 stretches are compositionally biased toward polar residues: residues 2805–2814 (DASSVSTGHA) and 2837–2846 (IPSSASSGHT). O-linked (GalNAc...) threonine glycosylation is found at Thr-2846, Thr-2847, and Thr-2852. The span at 2853–2877 (DASSVSTGHATSLPVTDASSVSTGH) shows a compositional bias: polar residues. A compositionally biased stretch (low complexity) spans 2895 to 2907 (TPLPLTSLSSVST). O-linked (GalNAc...) threonine glycans are attached at residues Thr-2910, Thr-2911, Thr-2916, Thr-2918, Thr-2923, Thr-2927, Thr-2932, Thr-2939, Thr-2942, Thr-2943, Thr-2948, Thr-2950, Thr-2955, Thr-2959, Thr-2966, Thr-2971, and Thr-2975. Over residues 2916 to 2942 (TDTSSASTGQATPLPVTSLSSVSTGDT) the composition is skewed to polar residues. Over residues 2948–2973 (TDTSSASTGHATSLPVTDTSSASTGH) the composition is skewed to polar residues. Polar residues-rich tracts occupy residues 2980–2989 (TDTSSASTGH) and 3009–3037 (LPVT…STGH). Thr-3023, Thr-3028, Thr-3035, and Thr-3039 each carry an O-linked (GalNAc...) threonine glycan. Over residues 3044–3069 (TDTSSASTGHANPLHVTSPSSASTGH) the composition is skewed to polar residues. Residues Thr-3071, Thr-3076, Thr-3078, Thr-3083, Thr-3087, Thr-3092, Thr-3099, Thr-3102, Thr-3103, Thr-3108, Thr-3115, Thr-3118, Thr-3119, Thr-3124, Thr-3126, Thr-3131, Thr-3135, Thr-3140, Thr-3142, Thr-3147, Thr-3150, Thr-3151, Thr-3156, Thr-3158, Thr-3163, Thr-3167, Thr-3172, Thr-3179, Thr-3182, Thr-3183, Thr-3188, Thr-3220, Thr-3227, Thr-3230, Thr-3231, Thr-3236, Thr-3243, Thr-3247, Thr-3252, and Thr-3254 are each glycosylated (O-linked (GalNAc...) threonine). Residues 3076-3118 (TDTSSASTGHATPLPVTSLSSVSTGDTTPLPVTSPSSASTGHT) are compositionally biased toward polar residues. Positions 3124–3134 (TDTSSASTGQA) are enriched in polar residues. Over residues 3140-3151 (TSTSSASTGDTT) the composition is skewed to low complexity. 2 stretches are compositionally biased toward polar residues: residues 3156–3197 (TDTS…STGH) and 3205–3251 (DASS…SLPV). A compositionally biased stretch (low complexity) spans 3252 to 3264 (TDTSSASTGDTTS). Residues 3265–3283 (LPVTDTSSAYTGDTTSLPV) are compositionally biased toward polar residues. A compositionally biased stretch (low complexity) spans 3284 to 3295 (TDTSSSSTGDTT). 9 O-linked (GalNAc...) threonine glycosylation sites follow: Thr-3294, Thr-3332, Thr-3339, Thr-3342, Thr-3343, Thr-3348, Thr-3350, Thr-3355, and Thr-3359. The segment covering 3320-3337 (SASTGHATPLHVTSPSSA) has biased composition (polar residues). Positions 3338 to 3356 (STGDTTPVPVTDTSSVSTG) are enriched in low complexity. 2 stretches are compositionally biased toward polar residues: residues 3365–3374 (GLSSASTGDT) and 3381–3405 (DISS…STGD). The N-linked (GlcNAc...) asparagine glycan is linked to Asn-3397. Thr-3398, Thr-3403, Thr-3406, Thr-3412, Thr-3419, Thr-3423, Thr-3428, Thr-3430, Thr-3435, Thr-3439, and Thr-3444 each carry an O-linked (GalNAc...) threonine glycan. Residues 3412 to 3421 (TSPSSASTGH) are compositionally biased toward polar residues. Residues 3428 to 3471 (TSTSSASTGHATPVPVTSTSSASTGHTTPLPVTDTSSASTGDTT) show a composition bias toward low complexity. Residue Ser-3445 is glycosylated (O-linked (GalNAc...) serine). O-linked (GalNAc...) threonine glycans are attached at residues Thr-3446, Thr-3451, Thr-3454, Thr-3455, Thr-3460, Thr-3462, Thr-3467, Thr-3470, Thr-3471, Thr-3476, Thr-3483, Thr-3486, Thr-3487, Thr-3492, Thr-3499, Thr-3502, Thr-3504, Thr-3508, Thr-3515, Thr-3519, Thr-3524, Thr-3526, Thr-3531, Thr-3535, Thr-3540, Thr-3547, Thr-3550, Thr-3551, Thr-3556, Thr-3567, Thr-3614, Thr-3615, Thr-3622, Thr-3678, Thr-3679, Thr-3686, Thr-3691, Thr-3695, Thr-3700, Thr-3710, Thr-3711, Thr-3716, Thr-3718, Thr-3723, Thr-3727, Thr-3732, Thr-3739, Thr-3743, Thr-3748, Thr-3780, Thr-3787, Thr-3790, Thr-3791, Thr-3796, Thr-3798, Thr-3803, Thr-3807, Thr-3812, Thr-3822, Thr-3823, Thr-3828, Thr-3835, Thr-3839, Thr-3844, Thr-3851, Thr-3854, Thr-3860, Thr-3867, Thr-3871, Thr-3876, Thr-3883, Thr-3886, Thr-3887, Thr-3892, Thr-3894, Thr-3899, Thr-3903, Thr-3935, Thr-3940, Thr-3942, Thr-3947, Thr-3950, Thr-3951, Thr-3956, Thr-3958, Thr-3963, Thr-3967, Thr-3972, Thr-3979, Thr-3983, Thr-3988, Thr-3990, Thr-3995, Thr-3999, Thr-4004, Thr-4006, Thr-4011, Thr-4015, and Thr-4020. The span at 3473 to 3486 (LPVTSPSSASTGHT) shows a compositional bias: polar residues. The span at 3493–3517 (IPSSASTGDTSTLPVTGASSASTGH) shows a compositional bias: polar residues. Residues 3524 to 3550 (TDTSSVSTGHATPLPVTSLSSVSTGDT) are compositionally biased toward polar residues. Over residues 3557–3580 (DASSASTGQATPLPVTSLSSVSTG) the composition is skewed to polar residues. Residues 3604–3615 (TDTSSASTGDTT) show a composition bias toward low complexity. Residues 3620–3644 (TDTSSASTGQATPLPVTSLSSVSTG) are compositionally biased toward polar residues. A compositionally biased stretch (low complexity) spans 3668 to 3679 (TDTSSASTGDTT). Positions 3684-3694 (TDTSSASTGQA) are enriched in polar residues. The segment covering 3710–3728 (TTPLPVTSTSSVSTGHVTP) has biased composition (low complexity). Positions 3730–3741 (HVTSPSSASTGH) are enriched in polar residues. The segment covering 3780–3791 (TDASSASTGDTT) has biased composition (low complexity). Residues 3796-3822 (TDTSSASTGQATPLPVTSLSSVSTGDT) are compositionally biased toward polar residues. Residues 3860-3869 (TSPSSASTGH) show a composition bias toward polar residues. Residues 3877–3886 (GLSSASTGDT) are compositionally biased toward polar residues. Over residues 3892–3901 (TDTSSASTRH) the composition is skewed to polar residues. Residues 3940-3951 (TSTSSASTGDTT) are compositionally biased toward low complexity. The span at 3956–3981 (TDTSSVSTGHATSLPVTSRSSASTGH) shows a compositional bias: polar residues. Residues 3988–3997 (TDTSSVSTGH) show a composition bias toward polar residues. Over residues 3999 to 4011 (TPLPVTSTSSVST) the composition is skewed to low complexity. Positions 4018 to 4029 (PVTSPSSASTGH) are enriched in polar residues. Ser-4021, Ser-4023, Ser-4024, and Ser-4026 each carry an O-linked (GalNAc...) serine glycan. 3 O-linked (GalNAc...) threonine glycosylation sites follow: Thr-4027, Thr-4031, and Thr-4036. Residues 4030 to 4047 (ATPVPVTSTSSASTGDTT) are compositionally biased toward low complexity. An O-linked (GalNAc...) serine glycan is attached at Ser-4037. Residues Thr-4038, Thr-4043, Thr-4046, and Thr-4047 are each glycosylated (O-linked (GalNAc...) threonine). Positions 4049–4093 (LPVTNASSLSTGHATPLHVTSPSSASRGDTSTLPVTDASSASTGH) are enriched in polar residues. Residue Asn-4053 is glycosylated (N-linked (GlcNAc...) asparagine). 2 O-linked (GalNAc...) threonine glycosylation sites follow: Thr-4078 and Thr-4084. Low complexity predominate over residues 4095 to 4107 (TPLPLTSLSSVST). Residues Thr-4110, Thr-4111, Thr-4116, Thr-4118, Thr-4123, Thr-4127, Thr-4132, Thr-4139, Thr-4142, Thr-4143, Thr-4148, Thr-4158, Thr-4159, Thr-4164, Thr-4171, Thr-4175, Thr-4180, Thr-4182, Thr-4187, Thr-4190, Thr-4191, Thr-4196, Thr-4198, Thr-4203, Thr-4207, Thr-4212, Thr-4214, Thr-4219, Thr-4223, and Thr-4239 are each glycosylated (O-linked (GalNAc...) threonine). Positions 4116–4142 (TDTSSASTGQATPLPVTSLSSVSTGDT) are enriched in polar residues. Over residues 4149–4173 (IPSSASSGHTTSLPVTDASSVSTGH) the composition is skewed to polar residues. Residues 4180–4191 (TSTSSASTGDTT) show a composition bias toward low complexity. Residues 4196–4205 (TDTSSASTGH) show a composition bias toward polar residues. A compositionally biased stretch (polar residues) spans 4212 to 4223 (TDTSSASTGHAT). Low complexity predominate over residues 4242–4254 (AVSSATSASTVSS). The interval 4242-4288 (AVSSATSASTVSSDSPLKMETPGMTTPSLKTDGGRRTATSPPPTTSQ) is disordered. 6 O-linked (GalNAc...) threonine glycosylation sites follow: Thr-4272, Thr-4278, Thr-4280, Thr-4289, Thr-4293, and Thr-4297. The 156-residue stretch at 4397-4552 (PFWDDADFST…GLQFYRLHRE (156 aa)) folds into the NIDO domain. In terms of domain architecture, AMOP spans 4553–4668 (ERPNYRLECL…YLCALYQQRR (116 aa)). Positions 4680–4880 (QPAWMFGDPH…TWQINGTGLL (201 aa)) constitute a VWFD domain. 16 N-linked (GlcNAc...) asparagine glycosylation sites follow: Asn-4715, Asn-4768, Asn-4787, Asn-4796, Asn-4831, Asn-4852, Asn-4875, Asn-4902, Asn-4928, Asn-4946, Asn-4982, Asn-4997, Asn-5045, Asn-5052, Asn-5100, and Asn-5119. The region spanning 5118 to 5157 (QNQSCPVNYCYNQGHCYISQTLGCQPMCTCPPAFTDSRCF) is the EGF-like 1 domain. Disulfide bonds link Cys-5122-Cys-5133, Cys-5127-Cys-5145, and Cys-5147-Cys-5156. N-linked (GlcNAc...) asparagine glycans are attached at residues Asn-5185, Asn-5192, and Asn-5292. In terms of domain architecture, EGF-like 2 spans 5321–5360 (VSPCSRGYCDHGGQCQHLPSGPRCSCVSFSIYTAWGEHCE). 3 disulfide bridges follow: Cys-5324–Cys-5335, Cys-5329–Cys-5344, and Cys-5346–Cys-5359. Residues 5369–5389 (FFGIFFGALGGLLLLGVGTFV) traverse the membrane as a helical segment.

As to quaternary structure, a heterodimeric complex, composed of a mucin-4 alpha chain and a cysteine-rich transmembrane mucin-4 beta chain. Mucin-4 beta chain interacts with ERBB2 via the EGF-like domain 1. In nonpolarized cells, associates with ERBB2 and ERBB3. In terms of processing, proteolytically cleaved into 2 chains, mucin-4 alpha chain and mucin-4 beta chain. Highly O-glycosylated. Post-translationally, is predominantly N-glycosylated. As to expression, expressed in the thymus, thyroid, lung, trachea, esophagus, stomach, small intestine, colon, testis, prostate, ovary, uterus, placenta, and mammary and salivary glands. Expressed in carcinomas arising from some of these epithelia, such as lung cancers, squamous cell carcinomas of the upper aerodigestive tract, mammary carcinomas, biliary tract, colon, and cervix cancers. Minimally or not expressed in the normal pancreas or chronic pancreatitis, but is highly expressed in pancreatic tumors and pancreatic tumor cell lines.

Its subcellular location is the cell membrane. The protein resides in the secreted. Membrane-bound mucin, a family of highly glycosylated proteins that constitute the major component of the mucus, the slimy and viscous secretion covering epithelial surfaces. These glycoproteins play important roles in the protection of the epithelium and are implicated in epithelial renewal and differentiation. Regulates cellular behavior through both anti-adhesive effects on cell-cell and cell-extracellular matrix interactions and its ability to act as an intramembrane ligand for ERBB2. Plays an important role in proliferation and differentiation of epithelial cells by inducing specific phosphorylation of ERBB2. In polarized epithelial cells, segregates ERBB2 and other ERBB receptors and prevents ERBB2 from acting as a coreceptor. The interaction with ERBB2 leads to enhanced expression of CDKN1B. The formation of a MUC4-ERBB2-ERBB3-NRG1 complex leads to down-regulation of CDKN1B, resulting in repression of apoptosis and stimulation of proliferation. Its ability to promote tumor growth may be mainly due to repression of apoptosis as opposed to proliferation. The sequence is that of Mucin-4 (MUC4) from Homo sapiens (Human).